Here is a 102-residue protein sequence, read N- to C-terminus: Large ribosomal subunit protein bL21 (102 aa).

Belongs to the bacterial ribosomal protein bL21 family. In terms of assembly, part of the 50S ribosomal subunit. Contacts protein L20.

In terms of biological role, this protein binds to 23S rRNA in the presence of protein L20. This Lachnospira eligens (strain ATCC 27750 / DSM 3376 / VPI C15-48 / C15-B4) (Eubacterium eligens) protein is Large ribosomal subunit protein bL21.